Reading from the N-terminus, the 396-residue chain is Elongation factor Tu (396 aa).

In terms of domain architecture, tr-type G spans 10-206 (KPHVNVGTIG…ALDSYIPEPE (197 aa)). The interval 19 to 26 (GHVDHGKT) is G1. 19–26 (GHVDHGKT) is a binding site for GTP. T26 is a Mg(2+) binding site. Residues 60–64 (GITIN) form a G2 region. Positions 81 to 84 (DCPG) are G3. GTP is bound by residues 81–85 (DCPGH) and 136–139 (NKAD). The G4 stretch occupies residues 136-139 (NKAD). Positions 174 to 176 (SAL) are G5.

The protein belongs to the TRAFAC class translation factor GTPase superfamily. Classic translation factor GTPase family. EF-Tu/EF-1A subfamily. As to quaternary structure, monomer.

The protein localises to the cytoplasm. It catalyses the reaction GTP + H2O = GDP + phosphate + H(+). Functionally, GTP hydrolase that promotes the GTP-dependent binding of aminoacyl-tRNA to the A-site of ribosomes during protein biosynthesis. This is Elongation factor Tu from Nitrosomonas europaea (strain ATCC 19718 / CIP 103999 / KCTC 2705 / NBRC 14298).